A 307-amino-acid polypeptide reads, in one-letter code: ATP synthase gamma chain (307 aa).

It belongs to the ATPase gamma chain family. F-type ATPases have 2 components, CF(1) - the catalytic core - and CF(0) - the membrane proton channel. CF(1) has five subunits: alpha(3), beta(3), gamma(1), delta(1), epsilon(1). CF(0) has three main subunits: a, b and c.

Its subcellular location is the cell membrane. In terms of biological role, produces ATP from ADP in the presence of a proton gradient across the membrane. The gamma chain is believed to be important in regulating ATPase activity and the flow of protons through the CF(0) complex. This chain is ATP synthase gamma chain, found in Bifidobacterium longum (strain DJO10A).